The following is a 528-amino-acid chain: Phosphoenolpyruvate carboxykinase (ATP) (528 aa).

Substrate is bound by residues arginine 56, tyrosine 192, and lysine 198. Residues lysine 198, histidine 217, and 233 to 241 (GLSGTGKTT) each bind ATP. Mn(2+) is bound by residues lysine 198 and histidine 217. Aspartate 254 provides a ligand contact to Mn(2+). ATP is bound by residues glutamate 282, arginine 319, and threonine 444. Residue arginine 319 coordinates substrate.

Belongs to the phosphoenolpyruvate carboxykinase (ATP) family. It depends on Mn(2+) as a cofactor.

It localises to the cytoplasm. It carries out the reaction oxaloacetate + ATP = phosphoenolpyruvate + ADP + CO2. Its pathway is carbohydrate biosynthesis; gluconeogenesis. In terms of biological role, involved in the gluconeogenesis. Catalyzes the conversion of oxaloacetate (OAA) to phosphoenolpyruvate (PEP) through direct phosphoryl transfer between the nucleoside triphosphate and OAA. This Bacillus anthracis (strain A0248) protein is Phosphoenolpyruvate carboxykinase (ATP).